A 400-amino-acid polypeptide reads, in one-letter code: Elongation factor Tu (400 aa).

A tr-type G domain is found at 10–210 (KPHVNVGTIG…ALDSYIPEPV (201 aa)). Residues 19-26 (GHVDHGKT) form a G1 region. A GTP-binding site is contributed by 19 to 26 (GHVDHGKT). Thr-26 serves as a coordination point for Mg(2+). The G2 stretch occupies residues 66–70 (ILTIA). Residues 87-90 (DCPG) form a G3 region. GTP-binding positions include 87-91 (DCPGH) and 142-145 (NKCD). Residues 142 to 145 (NKCD) are G4. Positions 180–182 (SAI) are G5.

This sequence belongs to the TRAFAC class translation factor GTPase superfamily. Classic translation factor GTPase family. EF-Tu/EF-1A subfamily. In terms of assembly, monomer.

Its subcellular location is the cytoplasm. The enzyme catalyses GTP + H2O = GDP + phosphate + H(+). Its function is as follows. GTP hydrolase that promotes the GTP-dependent binding of aminoacyl-tRNA to the A-site of ribosomes during protein biosynthesis. The sequence is that of Elongation factor Tu from Gemmatimonas aurantiaca (strain DSM 14586 / JCM 11422 / NBRC 100505 / T-27).